Reading from the N-terminus, the 92-residue chain is Ribonuclease P protein component 1 (92 aa).

It belongs to the eukaryotic/archaeal RNase P protein component 1 family. Consists of a catalytic RNA component and at least 4-5 protein subunits.

It localises to the cytoplasm. The catalysed reaction is Endonucleolytic cleavage of RNA, removing 5'-extranucleotides from tRNA precursor.. Part of ribonuclease P, a protein complex that generates mature tRNA molecules by cleaving their 5'-ends. The polypeptide is Ribonuclease P protein component 1 (Desulfurococcus amylolyticus (strain DSM 18924 / JCM 16383 / VKM B-2413 / 1221n) (Desulfurococcus kamchatkensis)).